The chain runs to 219 residues: MGQKINPLGFRLGTTQSHHSLWFAKPKNYCEGLQEDQKIRNFIKNYIKKNIRISSGVEGIARIEIQKRIDLIQVIIYIGFPKLLLENRPRRIEELQMNVQKELNCVNRKINIAITRITNPYGHPNILAEFIAGQLKNRVSFRKAMKKAIELTEQADTKGIQVQIAGRLDGKEIARAEWIREGRVPLQTIGAKIDYCSYTVRTIYGVLGIKIWIFVDEKK.

The region spanning 47–118 is the KH type-2 domain; sequence IKKNIRISSG…KINIAITRIT (72 aa).

The protein belongs to the universal ribosomal protein uS3 family. As to quaternary structure, part of the 30S ribosomal subunit.

Its subcellular location is the plastid. The protein resides in the chloroplast. This is Small ribosomal subunit protein uS3c (rps3) from Citrus sinensis (Sweet orange).